Here is a 317-residue protein sequence, read N- to C-terminus: Beta-ketoacyl-[acyl-carrier-protein] synthase III (317 aa).

Active-site residues include C112 and H244. Residues 245 to 249 (QANVR) form an ACP-binding region. Residue N274 is part of the active site.

It belongs to the thiolase-like superfamily. FabH family. Homodimer.

The protein resides in the cytoplasm. The enzyme catalyses malonyl-[ACP] + acetyl-CoA + H(+) = 3-oxobutanoyl-[ACP] + CO2 + CoA. The protein operates within lipid metabolism; fatty acid biosynthesis. Catalyzes the condensation reaction of fatty acid synthesis by the addition to an acyl acceptor of two carbons from malonyl-ACP. Catalyzes the first condensation reaction which initiates fatty acid synthesis and may therefore play a role in governing the total rate of fatty acid production. Possesses both acetoacetyl-ACP synthase and acetyl transacylase activities. Its substrate specificity determines the biosynthesis of branched-chain and/or straight-chain of fatty acids. This Rickettsia bellii (strain OSU 85-389) protein is Beta-ketoacyl-[acyl-carrier-protein] synthase III.